A 123-amino-acid polypeptide reads, in one-letter code: Cytochrome c-555 (123 aa).

An N-terminal signal peptide occupies residues 1 to 27; the sequence is MDHKKTSIRTTALAALVLGAVAAPAFS. Residues Cys46, Cys49, His50, and Met86 each contribute to the heme c site.

Post-translationally, binds 1 heme c group covalently per subunit.

The polypeptide is Cytochrome c-555 (Methylococcus capsulatus (strain ATCC 33009 / NCIMB 11132 / Bath)).